Reading from the N-terminus, the 355-residue chain is uncharacterized protein (355 aa).

ATP is bound at residue 58–65 (GYIIFGIK).

This is an uncharacterized protein from Ureaplasma parvum serovar 3 (strain ATCC 700970).